We begin with the raw amino-acid sequence, 387 residues long: GTP-binding protein 10 (387 aa).

An Obg domain is found at 13-148 (GNFIDNLRLF…RVIHLDLKLI (136 aa)). An OBG-type G domain is found at 149-344 (ADIGLVGFPN…LKNCIRKSLD (196 aa)). Residues 155-162 (GFPNAGKS), 202-206 (DLPGL), and 278-281 (NKMD) contribute to the GTP site.

It belongs to the TRAFAC class OBG-HflX-like GTPase superfamily. OBG GTPase family.

The protein localises to the nucleus. It is found in the nucleolus. In terms of biological role, may be involved in the ribosome maturation process. This is GTP-binding protein 10 (GTPBP10) from Bos taurus (Bovine).